The primary structure comprises 93 residues: Large ribosomal subunit protein uL23cz/uL23cy (93 aa).

The protein belongs to the universal ribosomal protein uL23 family. Part of the 50S ribosomal subunit.

The protein localises to the plastid. The protein resides in the chloroplast. Functionally, binds to 23S rRNA. The polypeptide is Large ribosomal subunit protein uL23cz/uL23cy (rpl23-A) (Eucalyptus globulus subsp. globulus (Tasmanian blue gum)).